A 106-amino-acid chain; its full sequence is Putative double-stranded DNA mimic protein PM0536 (106 aa).

Belongs to the putative dsDNA mimic protein family.

Its function is as follows. May act as a double-stranded DNA (dsDNA) mimic. Probably regulates the activity of a dsDNA-binding protein. The chain is Putative double-stranded DNA mimic protein PM0536 from Pasteurella multocida (strain Pm70).